We begin with the raw amino-acid sequence, 331 residues long: MPSCRRQGGMALLVVLLILSVMVIIASNMSGRLQLELRRTGNLTAGKQAWWYAMSAEALVSKVLVQDFKDDPNVVNLGQNWARQDAVFPVDDGKLTGRVRDLQSCFNLNSLSVPLKDGISGDDLEKQPYPVKAFRALLKQLEVEDYEAVQLTDAIRDWTDKDTALVSSYGAEDAYYEGLTPPYLTANQWMLSTDELRAVRGVSARLYARLAPYVCALPSDKLLVNINTIKPEQAALLVALYLDKVGLDDAKRVLTSRPQKGWKEKKAMTDQMPAPLSTIPGLDAVLDVKSSYFEARLIAEVGDTRARLESVFVRGKDNKLVMLRRLNGGAE.

Residues 1-9 (MPSCRRQGG) constitute a propeptide, leader sequence. A helical transmembrane segment spans residues 8-27 (GGMALLVVLLILSVMVIIAS). The Periplasmic segment spans residues 28-331 (NMSGRLQLEL…MLRRLNGGAE (304 aa)).

The protein belongs to the GSP K family. Type II secretion is composed of four main components: the outer membrane complex, the inner membrane complex, the cytoplasmic secretion ATPase and the periplasm-spanning pseudopilus. Interacts with core component ExeG. Cleaved by prepilin peptidase.

Its subcellular location is the cell inner membrane. Component of the type II secretion system required for the energy-dependent secretion of extracellular factors such as proteases and toxins from the periplasm. Plays a role in pseudopilus assembly and seems to control its length. Interacts with the pseudopilus tip complex that is critical for the recognition and binding of secretion substrates. In Aeromonas hydrophila, this protein is Type II secretion system protein K (exeK).